Here is a 496-residue protein sequence, read N- to C-terminus: Flt3-interacting zinc finger protein 1 (496 aa).

Met-1 carries the post-translational modification N-acetylmethionine. 6 C2H2-type zinc fingers span residues 23 to 45, 51 to 73, 79 to 101, 107 to 130, 200 to 222, and 228 to 250; these read FHCS…FARH, HACP…LRSH, YRCS…QVVH, YCCL…KRQH, FACG…WAAH, and FKCP…KLTH. Residues 250–280 are disordered; sequence HDLQGPGAPPAQAWAAGPGAGPETAGEGTAA. Over residues 259–280 the composition is skewed to low complexity; the sequence is PAQAWAAGPGAGPETAGEGTAA. 5 C2H2-type zinc fingers span residues 331 to 352, 358 to 381, 414 to 436, 442 to 464, and 470 to 492; these read YQCD…LEAH, YGCG…RVSH, FGCS…VLVH, FPCL…RLLH, and FPCH…LKLH. The segment at 378–412 is disordered; sequence RVSHGEGGGEEAATAAREREPASGEPPSGSGRGKK.

Interacts with FLT3 cytoplasmic catalytic domain, following receptor stimulation, in a kinase-independent manner. Does not interact with other structurally related receptor tyrosine kinases, including KIT, CSF1R and PDGFR. Interacts with NRL. In terms of tissue distribution, widely expressed.

Its subcellular location is the cytoplasm. It localises to the nucleus. Its function is as follows. May be a transcriptional repressor of NRL function in photoreceptors. Does not repress CRX-mediated transactivation. This is Flt3-interacting zinc finger protein 1 (FIZ1) from Homo sapiens (Human).